A 127-amino-acid chain; its full sequence is Small ribosomal subunit protein uS13 (127 aa).

The segment at Lys-90–Lys-127 is disordered. Over residues Thr-105–Val-117 the composition is skewed to basic residues.

Belongs to the universal ribosomal protein uS13 family. Part of the 30S ribosomal subunit. Forms a loose heterodimer with protein S19. Forms two bridges to the 50S subunit in the 70S ribosome.

Functionally, located at the top of the head of the 30S subunit, it contacts several helices of the 16S rRNA. In the 70S ribosome it contacts the 23S rRNA (bridge B1a) and protein L5 of the 50S subunit (bridge B1b), connecting the 2 subunits; these bridges are implicated in subunit movement. Contacts the tRNAs in the A and P-sites. This is Small ribosomal subunit protein uS13 from Salinibacter ruber (strain DSM 13855 / M31).